The sequence spans 466 residues: Ribulose bisphosphate carboxylase large chain (466 aa).

K5 is subject to N6,N6,N6-trimethyllysine. Residues N114 and T164 each contribute to the substrate site. Catalysis depends on K166, which acts as the Proton acceptor. Residue K168 coordinates substrate. Mg(2+)-binding residues include K192, D194, and E195. N6-carboxylysine is present on K192. H285 (proton acceptor) is an active-site residue. Substrate-binding residues include R286, H318, and S370.

The protein belongs to the RuBisCO large chain family. Type I subfamily. In terms of assembly, heterohexadecamer of 8 large chains and 8 small chains; disulfide-linked. The disulfide link is formed within the large subunit homodimers. The cofactor is Mg(2+). The disulfide bond which can form in the large chain dimeric partners within the hexadecamer appears to be associated with oxidative stress and protein turnover.

It is found in the plastid. The protein resides in the chloroplast. The enzyme catalyses 2 (2R)-3-phosphoglycerate + 2 H(+) = D-ribulose 1,5-bisphosphate + CO2 + H2O. It carries out the reaction D-ribulose 1,5-bisphosphate + O2 = 2-phosphoglycolate + (2R)-3-phosphoglycerate + 2 H(+). RuBisCO catalyzes two reactions: the carboxylation of D-ribulose 1,5-bisphosphate, the primary event in carbon dioxide fixation, as well as the oxidative fragmentation of the pentose substrate in the photorespiration process. Both reactions occur simultaneously and in competition at the same active site. The protein is Ribulose bisphosphate carboxylase large chain of Aesculus pavia (Red buckeye).